We begin with the raw amino-acid sequence, 790 residues long: Vacuolar protein sorting-associated protein 35C (790 aa).

Methionine 1 carries the post-translational modification N-acetylmethionine.

Belongs to the VPS35 family. As to quaternary structure, component of the retromer complex which consists of VPS29 (MAG1), VPS26 (VPS26A or VPS26B), VPS35 (VPS35A or VPS35B or VPS35C), VPS5/17 (SNX1 or SNX2A or SNX2B). Component of a retromer subcomplex consisting of VPS29 (MAG1), VPS26 (VPS26A or VPS26B), VPS35 (VPS35A or VPS35B or VPS35C).

It is found in the cytoplasm. Its subcellular location is the endosome membrane. The protein resides in the prevacuolar compartment membrane. The protein localises to the golgi apparatus. It localises to the trans-Golgi network membrane. In terms of biological role, plays a role in vesicular protein sorting. Component of the membrane-associated retromer complex which is essential in endosome-to-Golgi retrograde transport. Also involved in the efficient sorting of seed storage proteins. The VPS29-VPS26-VPS35 subcomplex may be involved in recycling of specific cargos from endosome to the plasma membrane. The protein is Vacuolar protein sorting-associated protein 35C (VPS35C) of Arabidopsis thaliana (Mouse-ear cress).